Here is a 65-residue protein sequence, read N- to C-terminus: Large ribosomal subunit protein bL35 (65 aa).

The interval 1–25 (MPKMKSHRGAAKRFKKTGTGKLKRA) is disordered.

The protein belongs to the bacterial ribosomal protein bL35 family.

The polypeptide is Large ribosomal subunit protein bL35 (Clostridium botulinum (strain Eklund 17B / Type B)).